The chain runs to 1227 residues: Multifunctional 2-oxoglutarate metabolism enzyme (1227 aa).

The tract at residues 1–41 is 2-oxoglutarate dehydrogenase E1, N-terminal part; sequence MSSSPSPFGQNEWLVEEMYRKFRDDPSSVDPSWHEFLVDYS. The segment covering 23–37 has biased composition (basic and acidic residues); sequence RDDPSSVDPSWHEFL. The tract at residues 23–102 is disordered; sequence RDDPSSVDPS…SATPAKGDES (80 aa). The tract at residues 42–88 is linker; the sequence is PEPTTDSASNGRTTTAAPVTPPTPAPAPAPEPKAAPKPAAKTEAKPA. Over residues 43–53 the composition is skewed to polar residues; sequence EPTTDSASNGR. The segment covering 60–76 has biased composition (pro residues); sequence VTPPTPAPAPAPEPKAA. Low complexity predominate over residues 88 to 97; it reads AKPAKSATPA. The tract at residues 89-335 is succinyltransferase E2; sequence KPAKSATPAK…LRTIHQLLLD (247 aa). His314 acts as the Proton acceptor; for succinyltransferase activity in catalysis. The 2-oxoglutarate dehydrogenase E1, C-terminal part stretch occupies residues 336–1227; it reads DDFFDEIFRE…QQEILDTAFG (892 aa). Position 540 (Arg540) interacts with thiamine diphosphate. 2-oxoglutarate contacts are provided by His579 and Ser604. Thiamine diphosphate is bound by residues Ser604, Leu606, Asp645, Ala646, Ala647, and Asn678. Position 645 (Asp645) interacts with Mg(2+). Mg(2+) is bound by residues Asn678 and Ile680. The stretch at 783–814 forms a coiled coil; the sequence is DISMKEAEDALRDYQGQLERVFNEVRELEKHE. Position 1020 (His1020) interacts with 2-oxoglutarate. Residues Thr1038, Arg1054, Lys1089, Ser1092, Gln1142, Arg1149, and Arg1150 each coordinate acetyl-CoA.

The protein belongs to the 2-oxoacid dehydrogenase family. Kgd subfamily. Homodimer. Interacts with the FHA domain of unphosphorylated GarA. The 2-oxoglutarate dehydrogenase (ODH) complex contains multiple copies of three enzymatic components: 2-oxoglutarate dehydrogenase (E1), dihydrolipoamide succinyltransferase (E2) and lipoamide dehydrogenase (E3). Requires Mg(2+) as cofactor. Thiamine diphosphate serves as cofactor.

It catalyses the reaction glyoxylate + 2-oxoglutarate + H(+) = 2-hydroxy-3-oxoadipate + CO2. The enzyme catalyses 2-oxoglutarate + H(+) = succinate semialdehyde + CO2. It carries out the reaction N(6)-[(R)-lipoyl]-L-lysyl-[protein] + 2-oxoglutarate + H(+) = N(6)-[(R)-S(8)-succinyldihydrolipoyl]-L-lysyl-[protein] + CO2. The catalysed reaction is N(6)-[(R)-dihydrolipoyl]-L-lysyl-[protein] + succinyl-CoA = N(6)-[(R)-S(8)-succinyldihydrolipoyl]-L-lysyl-[protein] + CoA. Its pathway is carbohydrate metabolism; tricarboxylic acid cycle; succinate from 2-oxoglutarate (transferase route): step 1/2. It participates in carbohydrate metabolism; tricarboxylic acid cycle; succinyl-CoA from 2-oxoglutarate (dehydrogenase route): step 1/1. Alpha-ketoglutarate dehydrogenase and decarboxylase activities are inhibited by unphosphorylated GarA, and allosterically activated by acetyl-CoA, the main substrate of the TCA cycle. Both the phosphoadenosine and acetyl moieties of acetyl-CoA are important for activation because neither CoA nor the synthetic compound S-(2-acetamidoethyl)-ethanethioate (which mimics the terminal acetyl-phosphopantetheine group of acetyl-CoA) has an activation effect. Shows three enzymatic activities that share a first common step, the attack of thiamine-PP on 2-oxoglutarate (alpha-ketoglutarate, KG), leading to the formation of an enamine-thiamine-PP intermediate upon decarboxylation. Thus, displays KGD activity, catalyzing the decarboxylation from five-carbon 2-oxoglutarate to four-carbon succinate semialdehyde (SSA). Also catalyzes C-C bond formation between the activated aldehyde formed after decarboxylation of alpha-ketoglutarate and the carbonyl of glyoxylate (GLX), to yield 2-hydroxy-3-oxoadipate (HOA), which spontaneously decarboxylates to form 5-hydroxylevulinate (HLA). And is also a component of the 2-oxoglutarate dehydrogenase (ODH) complex, that catalyzes the overall conversion of 2-oxoglutarate to succinyl-CoA and CO(2). The KG decarboxylase and KG dehydrogenase reactions provide two alternative, tightly regulated, pathways connecting the oxidative and reductive branches of the TCA cycle. The protein is Multifunctional 2-oxoglutarate metabolism enzyme (kgd) of Mycolicibacterium smegmatis (strain ATCC 700084 / mc(2)155) (Mycobacterium smegmatis).